A 1353-amino-acid chain; its full sequence is Xanthine dehydrogenase 2 (1353 aa).

A 2Fe-2S ferredoxin-type domain is found at 7–93 (MEAIMYVNGV…GMHVISIEGV (87 aa)). Residues cysteine 45, cysteine 50, cysteine 53, cysteine 75, cysteine 115, cysteine 118, cysteine 151, and cysteine 153 each coordinate [2Fe-2S] cluster. The FAD-binding PCMH-type domain occupies 249-434 (GGNEGITWYR…LSVFLPWTRP (186 aa)). Residues 277-284 (LLVGNTEV), phenylalanine 357, 367-371 (CIGGN), aspartate 380, leucine 424, and lysine 442 each bind FAD. 2 residues coordinate Mo-molybdopterin: glutamine 788 and phenylalanine 819. Substrate-binding residues include glutamate 823 and arginine 901. Mo-molybdopterin is bound at residue arginine 933. Residues phenylalanine 935 and threonine 1031 each contribute to the substrate site. A Mo-molybdopterin-binding site is contributed by alanine 1100. Residue glutamate 1289 is the Proton acceptor of the active site.

It belongs to the xanthine dehydrogenase family. In terms of assembly, homodimer. The cofactor is [2Fe-2S] cluster. FAD serves as cofactor. It depends on Mo-molybdopterin as a cofactor. Expressed in roots, leaves, stems, flowers and siliques.

It catalyses the reaction xanthine + NAD(+) + H2O = urate + NADH + H(+). The enzyme catalyses hypoxanthine + NAD(+) + H2O = xanthine + NADH + H(+). Its function is as follows. Key enzyme involved in purine catabolism. Catalyzes the oxidation of hypoxanthine to xanthine and the oxidation of xanthine to urate. Regulates the level of ureides and plays a role during plant growth and development and senescence. This chain is Xanthine dehydrogenase 2 (XDH2), found in Arabidopsis thaliana (Mouse-ear cress).